The sequence spans 118 residues: UPF0295 protein BA_0538/GBAA_0538/BAS0506 (118 aa).

2 helical membrane passes run 12–32 (IRTFALSLVFIGLFIAYLGVF) and 43–63 (FMMVGFLAVIASTVVYFWIGM).

The protein belongs to the UPF0295 family.

The protein localises to the cell membrane. The sequence is that of UPF0295 protein BA_0538/GBAA_0538/BAS0506 from Bacillus anthracis.